Here is a 120-residue protein sequence, read N- to C-terminus: Large ribosomal subunit protein uL22 (120 aa).

The protein belongs to the universal ribosomal protein uL22 family. In terms of assembly, part of the 50S ribosomal subunit.

In terms of biological role, this protein binds specifically to 23S rRNA; its binding is stimulated by other ribosomal proteins, e.g. L4, L17, and L20. It is important during the early stages of 50S assembly. It makes multiple contacts with different domains of the 23S rRNA in the assembled 50S subunit and ribosome. Functionally, the globular domain of the protein is located near the polypeptide exit tunnel on the outside of the subunit, while an extended beta-hairpin is found that lines the wall of the exit tunnel in the center of the 70S ribosome. This chain is Large ribosomal subunit protein uL22, found in Corynebacterium glutamicum (strain R).